Here is a 130-residue protein sequence, read N- to C-terminus: Small ribosomal subunit protein uS9 (130 aa).

The tract at residues 111 to 130 is disordered; the sequence is VERKKPGLKKARKASQFSKR. Residues 116 to 130 are compositionally biased toward basic residues; sequence PGLKKARKASQFSKR.

This sequence belongs to the universal ribosomal protein uS9 family.

In Lactococcus lactis subsp. lactis (strain IL1403) (Streptococcus lactis), this protein is Small ribosomal subunit protein uS9.